A 154-amino-acid polypeptide reads, in one-letter code: Ribosomal RNA large subunit methyltransferase H (154 aa).

G102 lines the S-adenosyl-L-methionine pocket.

The protein belongs to the RNA methyltransferase RlmH family. Homodimer.

Its subcellular location is the cytoplasm. The enzyme catalyses pseudouridine(1915) in 23S rRNA + S-adenosyl-L-methionine = N(3)-methylpseudouridine(1915) in 23S rRNA + S-adenosyl-L-homocysteine + H(+). In terms of biological role, specifically methylates the pseudouridine at position 1915 (m3Psi1915) in 23S rRNA. This chain is Ribosomal RNA large subunit methyltransferase H, found in Phenylobacterium zucineum (strain HLK1).